Reading from the N-terminus, the 306-residue chain is Porphobilinogen deaminase (306 aa).

Cysteine 239 carries the post-translational modification S-(dipyrrolylmethanemethyl)cysteine.

Belongs to the HMBS family. In terms of assembly, monomer. The cofactor is dipyrromethane.

It carries out the reaction 4 porphobilinogen + H2O = hydroxymethylbilane + 4 NH4(+). The protein operates within porphyrin-containing compound metabolism; protoporphyrin-IX biosynthesis; coproporphyrinogen-III from 5-aminolevulinate: step 2/4. Tetrapolymerization of the monopyrrole PBG into the hydroxymethylbilane pre-uroporphyrinogen in several discrete steps. The polypeptide is Porphobilinogen deaminase (hemC) (Helicobacter pylori (strain J99 / ATCC 700824) (Campylobacter pylori J99)).